The following is a 256-amino-acid chain: Triosephosphate isomerase (256 aa).

9-11 (NWK) is a binding site for substrate. H97 serves as the catalytic Electrophile. E169 (proton acceptor) is an active-site residue. Substrate-binding positions include G175, S214, and 235-236 (GG).

The protein belongs to the triosephosphate isomerase family. Homodimer.

It is found in the cytoplasm. The enzyme catalyses D-glyceraldehyde 3-phosphate = dihydroxyacetone phosphate. It functions in the pathway carbohydrate biosynthesis; gluconeogenesis. The protein operates within carbohydrate degradation; glycolysis; D-glyceraldehyde 3-phosphate from glycerone phosphate: step 1/1. Functionally, involved in the gluconeogenesis. Catalyzes stereospecifically the conversion of dihydroxyacetone phosphate (DHAP) to D-glyceraldehyde-3-phosphate (G3P). The chain is Triosephosphate isomerase from Aliivibrio salmonicida (strain LFI1238) (Vibrio salmonicida (strain LFI1238)).